Consider the following 133-residue polypeptide: FK506-binding protein 2 (133 aa).

A signal peptide spans 1–20; it reads MKLLYCLLLVILALVGLSSG. One can recognise a PPIase FKBP-type domain in the interval 45–133; sequence GDKLKIHYTG…IFDVELIGIN (89 aa).

This sequence belongs to the FKBP-type PPIase family.

It carries out the reaction [protein]-peptidylproline (omega=180) = [protein]-peptidylproline (omega=0). Inhibited by both FK506 and rapamycin. In terms of biological role, PPIases accelerate the folding of proteins by catalyzing the cis-trans isomerization of proline imidic peptide bonds in oligopeptides. This is FK506-binding protein 2 (fkbp2) from Dictyostelium discoideum (Social amoeba).